Here is a 305-residue protein sequence, read N- to C-terminus: Undecaprenyl-diphosphatase (305 aa).

8 helical membrane passes run 18 to 38, 55 to 75, 103 to 123, 130 to 150, 187 to 207, 225 to 245, 246 to 266, and 284 to 304; these read GVTE…PALV, YLAF…VFFW, WLIV…EQLF, PVPA…GEVL, GVLI…RSGI, FSFL…IPEL, FGPL…ASFV, and LTPF…WLAL.

It belongs to the UppP family.

It localises to the cell membrane. The catalysed reaction is di-trans,octa-cis-undecaprenyl diphosphate + H2O = di-trans,octa-cis-undecaprenyl phosphate + phosphate + H(+). Functionally, catalyzes the dephosphorylation of undecaprenyl diphosphate (UPP). Confers resistance to bacitracin. The chain is Undecaprenyl-diphosphatase from Mycobacterium avium (strain 104).